A 519-amino-acid polypeptide reads, in one-letter code: Probable DNA ligase (519 aa).

Glu211 contributes to the ATP binding site. Catalysis depends on Lys213, which acts as the N6-AMP-lysine intermediate. The ATP site is built by Arg218, Arg233, Glu262, Phe302, Arg374, and Lys380.

The protein belongs to the ATP-dependent DNA ligase family. The cofactor is Mg(2+).

It carries out the reaction ATP + (deoxyribonucleotide)n-3'-hydroxyl + 5'-phospho-(deoxyribonucleotide)m = (deoxyribonucleotide)n+m + AMP + diphosphate.. Its function is as follows. DNA ligase that seals nicks in double-stranded DNA during DNA replication, DNA recombination and DNA repair. In Anaeromyxobacter sp. (strain Fw109-5), this protein is Probable DNA ligase.